Reading from the N-terminus, the 125-residue chain is Small ribosomal subunit protein uS12m (125 aa).

Positions 1–51 (MPTKNQLIRHGREEKRRTDRTRALDQCPQKQGVCPRVSTRTPKKPNSAPRK) are disordered. Positions 10 to 23 (HGREEKRRTDRTRA) are enriched in basic and acidic residues.

It belongs to the universal ribosomal protein uS12 family.

It localises to the mitochondrion. Its function is as follows. Protein S12 is involved in the translation initiation step. The chain is Small ribosomal subunit protein uS12m (RPS12) from Nicotiana sylvestris (Wood tobacco).